Reading from the N-terminus, the 560-residue chain is Arginine--tRNA ligase (560 aa).

The 'HIGH' region motif lies at 164-174; it reads FYYNDAGNQID.

It belongs to the class-I aminoacyl-tRNA synthetase family. As to quaternary structure, monomer.

It is found in the cytoplasm. It catalyses the reaction tRNA(Arg) + L-arginine + ATP = L-arginyl-tRNA(Arg) + AMP + diphosphate. This chain is Arginine--tRNA ligase, found in Bordetella pertussis (strain Tohama I / ATCC BAA-589 / NCTC 13251).